We begin with the raw amino-acid sequence, 403 residues long: Subtilisin-like protease CPC735_035780 (403 aa).

The signal sequence occupies residues 1–19; that stretch reads MSIMKIATLFFAALSAVEA. Residues 20 to 117 constitute a propeptide that is removed on maturation; sequence AKLLTPSDKR…VEPDRRVHLT (98 aa). Residues 35–116 enclose the Inhibitor I9 domain; the sequence is SYIVVMKDNV…YVEPDRRVHL (82 aa). The region spanning 127-403 is the Peptidase S8 domain; it reads SWGLGRISHR…NKLLYNNSGR (277 aa). Residues Asp-159 and His-190 each act as charge relay system in the active site. 2 N-linked (GlcNAc...) asparagine glycosylation sites follow: Asn-233 and Asn-251. The active-site Charge relay system is the Ser-349. Asn-399 is a glycosylation site (N-linked (GlcNAc...) asparagine).

Belongs to the peptidase S8 family.

It is found in the secreted. Functionally, secreted subtilisin-like serine protease with keratinolytic activity that contributes to pathogenicity. This is Subtilisin-like protease CPC735_035780 from Coccidioides posadasii (strain C735) (Valley fever fungus).